We begin with the raw amino-acid sequence, 440 residues long: Cell division protein FtsA (440 aa).

The protein belongs to the FtsA/MreB family. Self-interacts. Interacts with FtsZ.

The protein localises to the cell membrane. Cell division protein that is involved in the assembly of the Z ring. May serve as a membrane anchor for the Z ring. This is Cell division protein FtsA from Enterococcus faecalis (strain ATCC 700802 / V583).